The primary structure comprises 580 residues: Transcription factor coe2-B (580 aa).

Residues 60-63 (RKSN) are interaction with DNA. The C5-type zinc-finger motif lies at 148–167 (CRVLLTHEVMCSRCCEKKSC). 2 interaction with DNA regions span residues 194-201 (NCLKTAGN) and 233-236 (NNSK). Residues 259 to 341 (PCIKAISPSE…CKGAPGRFIY (83 aa)) enclose the IPT/TIG domain. The disordered stretch occupies residues 455–492 (IRNTSSISPRGYSSSSTPQQSNYSTPSNSMNGYSNVPM). Residues 459–481 (SSISPRGYSSSSTPQQSNYSTPS) show a composition bias toward low complexity. The span at 482 to 492 (NSMNGYSNVPM) shows a compositional bias: polar residues.

Belongs to the COE family. As to expression, in embryos, expressed in precursors of primary neurons. In adults, expressed at high levels in the brain, and at low levels in the somatic muscles, testis, and possibly the spleen.

The protein localises to the nucleus. In terms of biological role, may play a pivotal role in the transcriptional cascade that specifies primary neurons in embryos. Stabilizes the higher neural potential of selected progenitor cells that express neurog2/X-ngnr-1 by maintaining Delta-Notch signaling. Thus ensures the transition between neural competence and irreversible commitment to a neural fate. Also promotes neuronal differentiation by activating neurod1 expression, directly or indirectly. In Xenopus laevis (African clawed frog), this protein is Transcription factor coe2-B.